The primary structure comprises 163 residues: Nucleotide-binding protein Mmcs_0777 (163 aa).

This sequence belongs to the YajQ family.

Functionally, nucleotide-binding protein. In Mycobacterium sp. (strain MCS), this protein is Nucleotide-binding protein Mmcs_0777.